The following is a 1331-amino-acid chain: Probable serine/threonine-protein kinase DDB_G0272254 (1331 aa).

Composition is skewed to low complexity over residues 1-42 (METS…NSSS), 96-116 (NDNNNSSSSSSSSSSGNNNNN), and 153-175 (TQQTPTTTATTNTSTSTTNSTPS). 3 disordered regions span residues 1–43 (METS…SSSA), 92–132 (DKIC…QQIS), and 150–175 (ILNTQQTPTTTATTNTSTSTTNSTPS). A run of 2 helical transmembrane segments spans residues 201 to 221 (FGFSPIYFVESIFIVLLIYIL) and 224 to 244 (FVLKETSVYVISIFVIYFVIY). Residues 259–287 (SINDSDSSSNNNNNNNNTTTTNNDSASTK) are compositionally biased toward low complexity. 4 disordered regions span residues 259-300 (SIND…PETY), 320-419 (NLNN…LSKE), 435-464 (SVGKTHNRSSSGSDSIQPPPLPTGGSSHNI), and 512-581 (AHSN…VVGN). The segment covering 288–299 (GNNNNEISSPET) has biased composition (polar residues). Polar residues predominate over residues 436–450 (VGKTHNRSSSGSDSI). Over residues 514-531 (SNNNNNNNNSNTNNNNNN) the composition is skewed to low complexity. Over residues 532-555 (QSVSAPVSQLATPVYQTPGTNSVV) the composition is skewed to polar residues. Positions 557–577 (NLENDNENNNDSFSDINDNNS) are enriched in low complexity. Kelch repeat units lie at residues 665 to 710 (SLVL…NHDY), 716 to 769 (KFYL…RYGN), 770 to 816 (RFLL…GHTS), 822 to 868 (KLII…ELND), 909 to 959 (NIVM…LIKN), and 962 to 1008 (KLFI…NNNN). Over residues 834–860 (NNNNNNNNNNNNNNNNNNNNNNNNNNN) the composition is skewed to low complexity. The disordered stretch occupies residues 834–862 (NNNNNNNNNNNNNNNNNNNNNNNNNNNKG). Residues 976-1042 (NNNSSSGGNN…NNNNNNNNNN (67 aa)) are disordered. One can recognise a Protein kinase domain in the interval 1073 to 1331 (IKIDKEIGKG…EITNYLTKTF (259 aa)). ATP contacts are provided by residues 1079–1087 (IGKGHFSKV) and Lys-1100. The active-site Proton acceptor is the Asp-1200.

Belongs to the protein kinase superfamily. TKL Ser/Thr protein kinase family.

It is found in the membrane. It catalyses the reaction L-seryl-[protein] + ATP = O-phospho-L-seryl-[protein] + ADP + H(+). The enzyme catalyses L-threonyl-[protein] + ATP = O-phospho-L-threonyl-[protein] + ADP + H(+). The protein is Probable serine/threonine-protein kinase DDB_G0272254 of Dictyostelium discoideum (Social amoeba).